The sequence spans 319 residues: Malate dehydrogenase (319 aa).

NAD(+) is bound by residues 10–15 and Asp-34; that span reads GAGNIG. The substrate site is built by Arg-83 and Arg-89. NAD(+) contacts are provided by residues Asn-96 and 119 to 121; that span reads ITN. Residues Asn-121 and Arg-152 each contribute to the substrate site. The active-site Proton acceptor is the His-176.

It belongs to the LDH/MDH superfamily. MDH type 3 family.

It catalyses the reaction (S)-malate + NAD(+) = oxaloacetate + NADH + H(+). In terms of biological role, catalyzes the reversible oxidation of malate to oxaloacetate. This is Malate dehydrogenase from Francisella novicida.